The primary structure comprises 311 residues: Formimidoylglutamase (311 aa).

Mn(2+) contacts are provided by His122, Asp151, His153, Asp155, Cys242, and Asp244.

Belongs to the arginase family. Mn(2+) serves as cofactor.

It catalyses the reaction N-formimidoyl-L-glutamate + H2O = formamide + L-glutamate. Its pathway is amino-acid degradation; L-histidine degradation into L-glutamate; L-glutamate from N-formimidoyl-L-glutamate (hydrolase route): step 1/1. Functionally, catalyzes the conversion of N-formimidoyl-L-glutamate to L-glutamate and formamide. This is Formimidoylglutamase from Pseudomonas paraeruginosa (strain DSM 24068 / PA7) (Pseudomonas aeruginosa (strain PA7)).